A 359-amino-acid polypeptide reads, in one-letter code: GATA-binding factor 1-A (359 aa).

The tract at residues 1–21 (MDYTTLTTQDPDPNYTESGLA) is disordered. 2 GATA-type zinc fingers span residues 178-202 (CVNC…CNAC) and 232-256 (CSNC…CNAC). Disordered regions lie at residues 271-311 (MKKE…SPYP) and 323-359 (PMGH…VTPP). Residues 279-291 (RNRKVSSRSKKKK) show a composition bias toward basic residues.

Expressed in the developing ventral blood island, and in both tadpole and adult erythrocytes.

It is found in the nucleus. In terms of biological role, transcription factor that acts synergistically with tal1/scl and lmo2 to specify embryonic dorsal mesoderm to a hematopoietic fate. The protein is GATA-binding factor 1-A (gata1-a) of Xenopus laevis (African clawed frog).